We begin with the raw amino-acid sequence, 299 residues long: Protoheme IX farnesyltransferase (299 aa).

9 consecutive transmembrane segments (helical) span residues 27-47, 53-73, 97-117, 121-141, 149-169, 175-195, 222-242, 244-264, and 273-293; these read VVALMLLTSVVGMSLAPHEHF, LIALVGIALMAGSAAAFNHLI, FNVLLFALLIGSLGFLSLMLW, LTAYLTFASLLGYAAVYTLYL, IVIAGIAGAMPPLLGWTSITG, AWVLVMIIFIWTPPHFWALAI, ILLYAILLALVCMLPVLVGMA, YLYLFSALVLNVCFVRYAIKL, and AIEMFRFSIYFLLLLFCALLL.

The protein belongs to the UbiA prenyltransferase family. Protoheme IX farnesyltransferase subfamily.

The protein localises to the cell inner membrane. The enzyme catalyses heme b + (2E,6E)-farnesyl diphosphate + H2O = Fe(II)-heme o + diphosphate. It participates in porphyrin-containing compound metabolism; heme O biosynthesis; heme O from protoheme: step 1/1. Its function is as follows. Converts heme B (protoheme IX) to heme O by substitution of the vinyl group on carbon 2 of heme B porphyrin ring with a hydroxyethyl farnesyl side group. The chain is Protoheme IX farnesyltransferase from Vibrio vulnificus (strain CMCP6).